The sequence spans 510 residues: Glycerol kinase (510 aa).

An ADP-binding site is contributed by Thr13. ATP contacts are provided by Thr13 and Thr14. Residue Thr13 coordinates sn-glycerol 3-phosphate. Arg17 lines the ADP pocket. Positions 83, 84, 135, and 255 each coordinate sn-glycerol 3-phosphate. Residues Arg83, Glu84, Tyr135, Asp255, and Gln256 each contribute to the glycerol site. Residues Thr277, Gly321, Gly421, and Asn425 each contribute to the ADP site. ATP is bound by residues Thr277, Gly321, and Gly421.

Belongs to the FGGY kinase family.

The enzyme catalyses glycerol + ATP = sn-glycerol 3-phosphate + ADP + H(+). It functions in the pathway polyol metabolism; glycerol degradation via glycerol kinase pathway; sn-glycerol 3-phosphate from glycerol: step 1/1. In terms of biological role, key enzyme in the regulation of glycerol uptake and metabolism. Catalyzes the phosphorylation of glycerol to yield sn-glycerol 3-phosphate. In Haloarcula marismortui (strain ATCC 43049 / DSM 3752 / JCM 8966 / VKM B-1809) (Halobacterium marismortui), this protein is Glycerol kinase.